The sequence spans 441 residues: MFS-type transporter (441 aa).

The segment at 1 to 47 (MPPQQEQDTDSDAIRSYNEESKSETPGCIPDAMLSSDETSNDVASDI) is disordered. The next 10 membrane-spanning stretches (helical) occupy residues 61–81 (TLCG…FGIF), 95–115 (DISW…AFVG), 125–145 (LVLS…SLST), 150–170 (LILS…TPAV), 183–203 (LAIG…NSMA), 212–232 (FGWT…FVVV), 259–279 (FFTI…YYIA), 289–309 (TLTY…GVFG), 323–343 (LELL…WIAV), and 351–371 (VWTV…PAGI). Asn-388 carries an N-linked (GlcNAc...) asparagine glycan. Helical transmembrane passes span 389–409 (FTVI…IITA) and 415–435 (YGAQ…IVAA).

This sequence belongs to the major facilitator superfamily. Monocarboxylate porter (TC 2.A.1.13) family.

Its subcellular location is the membrane. Its function is as follows. MFS-type transporter; part of the gene cluster that mediates the biosynthesis of butenolide, a mycotoxin that shows antibiotic activity but does not seem to play a major role in the spread of head blight in wheat. The protein is MFS-type transporter of Gibberella zeae (strain ATCC MYA-4620 / CBS 123657 / FGSC 9075 / NRRL 31084 / PH-1) (Wheat head blight fungus).